A 393-amino-acid polypeptide reads, in one-letter code: CCA-adding enzyme (393 aa).

2 residues coordinate ATP: G27 and R30. CTP is bound by residues G27 and R30. Residues D40 and D42 each contribute to the Mg(2+) site. Residues R111, D154, R157, R160, and R163 each coordinate ATP. Residues R111, D154, R157, R160, and R163 each contribute to the CTP site.

Belongs to the tRNA nucleotidyltransferase/poly(A) polymerase family. Bacterial CCA-adding enzyme type 3 subfamily. In terms of assembly, homodimer. It depends on Mg(2+) as a cofactor.

It carries out the reaction a tRNA precursor + 2 CTP + ATP = a tRNA with a 3' CCA end + 3 diphosphate. The catalysed reaction is a tRNA with a 3' CCA end + 2 CTP + ATP = a tRNA with a 3' CCACCA end + 3 diphosphate. Functionally, catalyzes the addition and repair of the essential 3'-terminal CCA sequence in tRNAs without using a nucleic acid template. Adds these three nucleotides in the order of C, C, and A to the tRNA nucleotide-73, using CTP and ATP as substrates and producing inorganic pyrophosphate. tRNA 3'-terminal CCA addition is required both for tRNA processing and repair. Also involved in tRNA surveillance by mediating tandem CCA addition to generate a CCACCA at the 3' terminus of unstable tRNAs. While stable tRNAs receive only 3'-terminal CCA, unstable tRNAs are marked with CCACCA and rapidly degraded. In Listeria monocytogenes serotype 4b (strain F2365), this protein is CCA-adding enzyme.